A 316-amino-acid chain; its full sequence is DNA-directed RNA polymerase III subunit RPC6 (316 aa).

The residue at position 2 (Ala2) is an N-acetylalanine. Glycyl lysine isopeptide (Lys-Gly) (interchain with G-Cter in SUMO2) cross-links involve residues Lys5 and Lys7. 4 residues coordinate [4Fe-4S] cluster: Cys287, Cys290, Cys296, and Cys307.

Belongs to the eukaryotic RPC34/RPC39 RNA polymerase subunit family. In terms of assembly, component of the RNA polymerase III complex consisting of 17 subunits: a ten-subunit horseshoe-shaped catalytic core composed of POLR3A/RPC1, POLR3B/RPC2, POLR1C/RPAC1, POLR1D/RPAC2, POLR3K/RPC10, POLR2E/RPABC1, POLR2F/RPABC2, POLR2H/RPABC3, POLR2K/RPABC4 and POLR2L/RPABC5; a mobile stalk composed of two subunits POLR3H/RPC8 and CRCP/RPC9, protruding from the core and functioning primarily in transcription initiation; and additional subunits homologous to general transcription factors of the RNA polymerase II machinery, POLR3C/RPC3-POLR3F/RPC6-POLR3G/RPC7 heterotrimer required for transcription initiation and POLR3D/RPC4-POLR3E/RPC5 heterodimer involved in both transcription initiation and termination. Directly interacts with POLR3C. Interacts with TBP and TFIIIB90 and GTF3C4. Interacts with MAF1. As part of the RNA polymerase III complex, interacts with PKP2.

The protein localises to the nucleus. Its function is as follows. DNA-dependent RNA polymerase catalyzes the transcription of DNA into RNA using the four ribonucleoside triphosphates as substrates. Specific peripheric component of RNA polymerase III (Pol III) which synthesizes small non-coding RNAs including 5S rRNA, snRNAs, tRNAs and miRNAs from at least 500 distinct genomic loci. Part of POLR3C/RPC3-POLR3F/RPC6-POLR3G/RPC7 heterotrimer that coordinates the dynamics of Pol III stalk and clamp modules during the transition from apo to elongation state. Pol III plays a key role in sensing and limiting infection by intracellular bacteria and DNA viruses, including varicella zoster virus. Acts as a nuclear and cytosolic DNA sensor detecting AT-rich DNA, involved in innate immune response. Can sense non-self dsDNA that serves as template for transcription into dsRNA. The non-self RNA polymerase III transcripts, such as Epstein-Barr virus-encoded RNAs (EBERs) induce type I interferon and NF-kappa-B through the RIG-I pathway. Preferentially binds double-stranded DNA (dsDNA). The protein is DNA-directed RNA polymerase III subunit RPC6 of Homo sapiens (Human).